A 240-amino-acid polypeptide reads, in one-letter code: Adiponectin (240 aa).

The signal sequence occupies residues 1–17; it reads MLLQGALLLLLALPSHG. K28 carries the post-translational modification 5-hydroxylysine. K28 is a glycosylation site (O-linked (Gal...) hydroxylysine). Positions 29 to 100 are disordered; that stretch reads GACAGWMAGI…GTPGRKGEPG (72 aa). C31 bears the S-(2-succinyl)cysteine mark. 3 positions are modified to 4-hydroxyproline: P39, P42, and P48. The Collagen-like domain occupies 43–102; the sequence is GHNGTPGRDGRDGTPGEKGEKGDPGLVGPKGDTGETGITGIEGPRGFPGTPGRKGEPGES. Over residues 50–65 the composition is skewed to basic and acidic residues; sequence RDGRDGTPGEKGEKGD. K60, K63, and K72 each carry 5-hydroxylysine. O-linked (Gal...) hydroxylysine glycosylation is found at K60, K63, and K72. P86 bears the 4-hydroxyproline mark. K96 is modified (5-hydroxylysine). An O-linked (Gal...) hydroxylysine glycan is attached at K96. A C1q domain is found at 103 to 240; the sequence is AYVYRSAFSV…GFLLYHNIVE (138 aa).

Homomultimer. Forms trimers, hexamers and 12- to 18-mers. The trimers (low molecular weight complexes / LMW) are assembled via non-covalent interactions of the collagen-like domains in a triple helix and hydrophobic interactions within the globular C1q domain. Several trimers can associate to form disulfide-linked hexamers (middle molecular weight complexes / MMW) and larger complexes (higher molecular weight / HMW). The HMW-complex assembly is also modulated by the degree of lysine hydroxylation and glycosylation. LMW, MMW and HMW complexes bind to HBEGF, MMW and HMW complexes bind to PDGFB, and HMW complex binds to FGF2. Interacts with CTRP9 via the C1q domain (heterotrimeric complex). In terms of processing, HMW complexes are more extensively glycosylated than smaller oligomers. Hydroxylation and glycosylation of the lysine residues within the collagen-like domain of adiponectin seem to be critically involved in regulating the formation and/or secretion of HMW complexes and consequently contribute to the insulin-sensitizing activity of adiponectin in hepatocytes. O-glycosylated. O-linked glycans on hydroxylysine residues consist of Glc-Gal disaccharides bound to the oxygen atom of post-translationally added hydroxyl groups. O-linked glycosylations elsewhere disialylated with the structure Neu5Acalpha2-&gt;8Neu5Acalpha2-&gt;3Gal. Sialylated by alpha 2,8-sialyltransferase III. Desialylated forms are rapidly cleared from the circulation. Not N-glycosylated. Post-translationally, succination of Cys-31 by the Krebs cycle intermediate fumarate, which leads to S-(2-succinyl)cysteine residues, inhibits polymerization and secretion of adiponectin. Adiponectin is a major target for succination in both adipocytes and adipose tissue of diabetic mammals. It was proposed that succination of proteins is a biomarker of mitochondrial stress and accumulation of Krebs cycle intermediates in adipose tissue in diabetes and that succination of adiponectin may contribute to the decrease in plasma adiponectin in diabetes.

It localises to the secreted. With respect to regulation, polymerization and secretion of adiponectin is inhibited by succination of cysteine residues by the Krebs cycle intermediate fumarate, which leads to S-(2-succinyl)cysteine residues. Important adipokine involved in the control of fat metabolism and insulin sensitivity, with direct anti-diabetic, anti-atherogenic and anti-inflammatory activities. Stimulates AMPK phosphorylation and activation in the liver and the skeletal muscle, enhancing glucose utilization and fatty-acid combustion. Antagonizes TNF-alpha by negatively regulating its expression in various tissues such as liver and macrophages, and also by counteracting its effects. Inhibits endothelial NF-kappa-B signaling through a cAMP-dependent pathway. May play a role in cell growth, angiogenesis and tissue remodeling by binding and sequestering various growth factors with distinct binding affinities, depending on the type of complex, LMW, MMW or HMW. The polypeptide is Adiponectin (ADIPOQ) (Bos taurus (Bovine)).